The sequence spans 315 residues: Tyrosine recombinase XerC (315 aa).

Residues 13 to 104 (ADLAAAREEW…GVRSLLRHLE (92 aa)) form the Core-binding (CB) domain. A Tyr recombinase domain is found at 125 to 309 (SLPKPLTADD…DTQRLLEVYD (185 aa)). Active-site residues include arginine 168, lysine 193, histidine 261, arginine 264, and histidine 287. Tyrosine 296 functions as the O-(3'-phospho-DNA)-tyrosine intermediate in the catalytic mechanism.

It belongs to the 'phage' integrase family. XerC subfamily. In terms of assembly, forms a cyclic heterotetrameric complex composed of two molecules of XerC and two molecules of XerD.

It localises to the cytoplasm. In terms of biological role, site-specific tyrosine recombinase, which acts by catalyzing the cutting and rejoining of the recombining DNA molecules. The XerC-XerD complex is essential to convert dimers of the bacterial chromosome into monomers to permit their segregation at cell division. It also contributes to the segregational stability of plasmids. This is Tyrosine recombinase XerC from Brucella melitensis biotype 1 (strain ATCC 23456 / CCUG 17765 / NCTC 10094 / 16M).